The primary structure comprises 377 residues: UPF0425 pyridoxal phosphate-dependent protein MTH_1914 (377 aa).

K207 bears the N6-(pyridoxal phosphate)lysine mark.

The protein belongs to the UPF0425 family. The cofactor is pyridoxal 5'-phosphate.

This is UPF0425 pyridoxal phosphate-dependent protein MTH_1914 from Methanothermobacter thermautotrophicus (strain ATCC 29096 / DSM 1053 / JCM 10044 / NBRC 100330 / Delta H) (Methanobacterium thermoautotrophicum).